We begin with the raw amino-acid sequence, 457 residues long: Siroheme synthase (457 aa).

The interval Met-1–Thr-204 is precorrin-2 dehydrogenase /sirohydrochlorin ferrochelatase. Residues Asp-22–Val-23 and Leu-43–Ala-44 contribute to the NAD(+) site. Position 128 is a phosphoserine (Ser-128). The tract at residues Gly-216–His-457 is uroporphyrinogen-III C-methyltransferase. Residue Pro-225 coordinates S-adenosyl-L-methionine. Asp-248 acts as the Proton acceptor in catalysis. Lys-270 functions as the Proton donor in the catalytic mechanism. S-adenosyl-L-methionine-binding positions include Gly-301–Asp-303, Ile-306, Thr-331–Ala-332, Met-382, and Gly-411.

The protein in the N-terminal section; belongs to the precorrin-2 dehydrogenase / sirohydrochlorin ferrochelatase family. In the C-terminal section; belongs to the precorrin methyltransferase family.

It carries out the reaction uroporphyrinogen III + 2 S-adenosyl-L-methionine = precorrin-2 + 2 S-adenosyl-L-homocysteine + H(+). The catalysed reaction is precorrin-2 + NAD(+) = sirohydrochlorin + NADH + 2 H(+). The enzyme catalyses siroheme + 2 H(+) = sirohydrochlorin + Fe(2+). It functions in the pathway cofactor biosynthesis; adenosylcobalamin biosynthesis; precorrin-2 from uroporphyrinogen III: step 1/1. It participates in cofactor biosynthesis; adenosylcobalamin biosynthesis; sirohydrochlorin from precorrin-2: step 1/1. Its pathway is porphyrin-containing compound metabolism; siroheme biosynthesis; precorrin-2 from uroporphyrinogen III: step 1/1. The protein operates within porphyrin-containing compound metabolism; siroheme biosynthesis; siroheme from sirohydrochlorin: step 1/1. It functions in the pathway porphyrin-containing compound metabolism; siroheme biosynthesis; sirohydrochlorin from precorrin-2: step 1/1. In terms of biological role, multifunctional enzyme that catalyzes the SAM-dependent methylations of uroporphyrinogen III at position C-2 and C-7 to form precorrin-2 via precorrin-1. Then it catalyzes the NAD-dependent ring dehydrogenation of precorrin-2 to yield sirohydrochlorin. Finally, it catalyzes the ferrochelation of sirohydrochlorin to yield siroheme. This Escherichia coli O81 (strain ED1a) protein is Siroheme synthase.